The following is a 105-amino-acid chain: Met repressor (105 aa).

The protein belongs to the MetJ family. In terms of assembly, homodimer.

The protein resides in the cytoplasm. Functionally, this regulatory protein, when combined with SAM (S-adenosylmethionine) represses the expression of the methionine regulon and of enzymes involved in SAM synthesis. The protein is Met repressor of Yersinia pestis bv. Antiqua (strain Antiqua).